The sequence spans 1119 residues: DISARM protein DrmA (1119 aa).

The interval 73 to 95 (PESGMEEDVEQQRNSELEQEAEE) is disordered. The Helicase C-terminal domain maps to 813 to 986 (ELSKYIDPYR…ATPYASRARD (174 aa)).

Belongs to the helicase family.

Its subcellular location is the cytoplasm. Functionally, component of antiviral defense system DISARM (defense island system associated with restriction-modification), composed of DrmE, DrmA, DrmB, DrmC and DrmMII. DISARM is probably a multi-gene restriction module, this subunit is probably a helicase. Expression of DISARM in B.subtilis (strain BEST7003) confers resistance to phages Nf, phi29, phi105, phi3T, SPO1, SPR and SPP1. Protection is over 10(7)-fold against phi3T, 10(4)-10(5)-fold against Nf, phi29, phi105 and SPR, 100-fold against SPO1 and 10-fold against SPP1. DISARM does not interfere with phage adsorption, but instead interferes with (phi3T) DNA replication early in its cycle, preventing replication, circularization and lysogeny and probably causes phage DNA degradation (DNA is degraded in SPP1-infected cells). The sequence is that of DISARM protein DrmA from Bacillus paralicheniformis (strain ATCC 9945a / NCIMB 11709 / CD-2).